Consider the following 193-residue polypeptide: Probable GTP-binding protein EngB (193 aa).

The EngB-type G domain occupies 22–193 (GLPEFAFAGR…LIAVLESYLA (172 aa)). GTP contacts are provided by residues 30–37 (GRSNVGKS), 57–61 (GKTQG), 75–78 (DLPG), 142–145 (TKID), and 173–175 (FSS). Mg(2+) contacts are provided by serine 37 and threonine 59.

It belongs to the TRAFAC class TrmE-Era-EngA-EngB-Septin-like GTPase superfamily. EngB GTPase family. Requires Mg(2+) as cofactor.

Functionally, necessary for normal cell division and for the maintenance of normal septation. The polypeptide is Probable GTP-binding protein EngB (Desulfotalea psychrophila (strain LSv54 / DSM 12343)).